A 147-amino-acid chain; its full sequence is Ribonuclease 4 (147 aa).

A signal peptide spans 1 to 28 (MALQRTHSLLLLLLLTLLGLGLVQPSYG). A Pyrrolidone carboxylic acid modification is found at glutamine 29. The dUMP site is built by arginine 35, histidine 40, lysine 68, asparagine 71, and threonine 72. Histidine 40 functions as the Proton acceptor in the catalytic mechanism. Intrachain disulfides connect cysteine 53/cysteine 109, cysteine 67/cysteine 120, cysteine 85/cysteine 135, and cysteine 92/cysteine 99. Catalysis depends on histidine 144, which acts as the Proton donor. Phenylalanine 145 is a dUMP binding site.

This sequence belongs to the pancreatic ribonuclease family.

It localises to the secreted. In terms of biological role, cleaves preferentially after uridine bases. Has antimicrobial activity against uropathogenic E.coli (UPEC). Probably contributes to urinary tract sterility. The chain is Ribonuclease 4 (RNASE4) from Pan troglodytes (Chimpanzee).